A 977-amino-acid polypeptide reads, in one-letter code: Structural protein ORF43 (977 aa).

The interval D531–T556 is disordered.

It belongs to the ascovirus HvAV ORF146 family.

Its subcellular location is the virion. The polypeptide is Structural protein ORF43 (Noctuidae (owlet moths)).